Consider the following 388-residue polypeptide: Na(+)/H(+) antiporter NhaA (388 aa).

Residues 1–11 (MKHLHRFFSSD) are Cytoplasmic-facing. Residues 12-31 (ASGGIILIIAAILAMMMANS) form a helical membrane-spanning segment. The Periplasmic segment spans residues 32-58 (GATSGWYHDFLETPVQLRVGSLEINKN). A helical transmembrane segment spans residues 59 to 80 (MLLWINDALMAVFFLLVGLEVK). Residues 81–96 (RELMQGSLASLRQAAF) are Cytoplasmic-facing. The chain crosses the membrane as a helical span at residues 97 to 116 (PVIAAIGGMIVPALLYLAFN). The Periplasmic portion of the chain corresponds to 117-122 (YADPIT). The helical transmembrane segment at 123–130 (REGWAIPA) threads the bilayer. Residues 131–154 (ATDIAFALGVLALLGSRVPLALKI) lie on the Cytoplasmic side of the membrane. A helical membrane pass occupies residues 155–176 (FLMALAIIDDLGAIIIIALFYT). The Periplasmic segment spans residues 177-180 (NDLS). The chain crosses the membrane as a helical span at residues 181-200 (MASLGVAAVAIAVLAVLNLC). Residues 201–204 (GVRR) are Cytoplasmic-facing. A helical transmembrane segment spans residues 205-222 (TGVYILVGVVLWTAVLKS). Residue Gly-223 is a topological domain, periplasmic. A helical transmembrane segment spans residues 224-236 (VHATLAGVIVGFF). At 237–253 (IPLKEKHGRSPAKRLEH) the chain is on the cytoplasmic side. The helical transmembrane segment at 254–272 (VLHPWVAYLILPLFAFANA) threads the bilayer. The Periplasmic segment spans residues 273-286 (GVSLQGVTLDGLTS). The helical transmembrane segment at 287 to 310 (ILPLGIIAGLLIGKPLGISLFCWL) threads the bilayer. The Cytoplasmic portion of the chain corresponds to 311–339 (ALRLKLAHLPEGTTYQQIMAVGILCGIGF). Residues 340-350 (TMSIFIASLAF) traverse the membrane as a helical segment. Residues 351-357 (GSVDPEL) lie on the Periplasmic side of the membrane. Residues 358–380 (INWAKLGILVGSISSAVIGYSWL) form a helical membrane-spanning segment. Residues 381–388 (RVRLRPSV) lie on the Cytoplasmic side of the membrane.

It belongs to the NhaA Na(+)/H(+) (TC 2.A.33) antiporter family.

The protein resides in the cell inner membrane. It carries out the reaction Na(+)(in) + 2 H(+)(out) = Na(+)(out) + 2 H(+)(in). Its function is as follows. Na(+)/H(+) antiporter that extrudes sodium in exchange for external protons. The chain is Na(+)/H(+) antiporter NhaA from Shigella boydii serotype 4 (strain Sb227).